The following is a 262-amino-acid chain: Tryptophan synthase alpha chain (262 aa).

Residues glutamate 49 and aspartate 60 each act as proton acceptor in the active site.

Belongs to the TrpA family. As to quaternary structure, tetramer of two alpha and two beta chains.

It carries out the reaction (1S,2R)-1-C-(indol-3-yl)glycerol 3-phosphate + L-serine = D-glyceraldehyde 3-phosphate + L-tryptophan + H2O. It participates in amino-acid biosynthesis; L-tryptophan biosynthesis; L-tryptophan from chorismate: step 5/5. In terms of biological role, the alpha subunit is responsible for the aldol cleavage of indoleglycerol phosphate to indole and glyceraldehyde 3-phosphate. In Thermoanaerobacter sp. (strain X514), this protein is Tryptophan synthase alpha chain.